Consider the following 360-residue polypeptide: Peptide chain release factor 1 (360 aa).

An N5-methylglutamine modification is found at Gln-235.

Belongs to the prokaryotic/mitochondrial release factor family. Post-translationally, methylated by PrmC. Methylation increases the termination efficiency of RF1.

Its subcellular location is the cytoplasm. Its function is as follows. Peptide chain release factor 1 directs the termination of translation in response to the peptide chain termination codons UAG and UAA. This chain is Peptide chain release factor 1, found in Mannheimia succiniciproducens (strain KCTC 0769BP / MBEL55E).